Here is a 232-residue protein sequence, read N- to C-terminus: Multiple organellar RNA editing factor 6, mitochondrial (232 aa).

A mitochondrion-targeting transit peptide spans 1-67; sequence MAKTLSRSTA…TIRTRMDRSG (67 aa). The tract at residues 208–232 is disordered; sequence TNQRGSDKPKYHDRIRNVRRRENMR. Positions 212 to 232 are enriched in basic and acidic residues; it reads GSDKPKYHDRIRNVRRRENMR.

The protein belongs to the MORF family. Heterodimers with MORF8/RIP1, MORF3/RIP3, MORF6/RIP6, MORF7/RIP7 and MORF9/RIP9.

It localises to the mitochondrion. Functionally, involved in organellar RNA editing. Required for the processing of few RNA editing sites in mitochondria. This Arabidopsis thaliana (Mouse-ear cress) protein is Multiple organellar RNA editing factor 6, mitochondrial.